Here is an 85-residue protein sequence, read N- to C-terminus: ATP synthase subunit c (85 aa).

Transmembrane regions (helical) follow at residues Ile10–Leu30 and Phe53–Phe73.

Belongs to the ATPase C chain family. F-type ATPases have 2 components, F(1) - the catalytic core - and F(0) - the membrane proton channel. F(1) has five subunits: alpha(3), beta(3), gamma(1), delta(1), epsilon(1). F(0) has three main subunits: a(1), b(2) and c(10-14). The alpha and beta chains form an alternating ring which encloses part of the gamma chain. F(1) is attached to F(0) by a central stalk formed by the gamma and epsilon chains, while a peripheral stalk is formed by the delta and b chains.

Its subcellular location is the cell inner membrane. F(1)F(0) ATP synthase produces ATP from ADP in the presence of a proton or sodium gradient. F-type ATPases consist of two structural domains, F(1) containing the extramembraneous catalytic core and F(0) containing the membrane proton channel, linked together by a central stalk and a peripheral stalk. During catalysis, ATP synthesis in the catalytic domain of F(1) is coupled via a rotary mechanism of the central stalk subunits to proton translocation. In terms of biological role, key component of the F(0) channel; it plays a direct role in translocation across the membrane. A homomeric c-ring of between 10-14 subunits forms the central stalk rotor element with the F(1) delta and epsilon subunits. The sequence is that of ATP synthase subunit c from Idiomarina loihiensis (strain ATCC BAA-735 / DSM 15497 / L2-TR).